Consider the following 319-residue polypeptide: Acetyl-coenzyme A carboxylase carboxyl transferase subunit alpha (319 aa).

The region spanning 39-293 is the CoA carboxyltransferase C-terminal domain; the sequence is RLQKKSNDLT…KAVLEKQLHE (255 aa).

It belongs to the AccA family. Acetyl-CoA carboxylase is a heterohexamer composed of biotin carboxyl carrier protein (AccB), biotin carboxylase (AccC) and two subunits each of ACCase subunit alpha (AccA) and ACCase subunit beta (AccD).

The protein localises to the cytoplasm. It carries out the reaction N(6)-carboxybiotinyl-L-lysyl-[protein] + acetyl-CoA = N(6)-biotinyl-L-lysyl-[protein] + malonyl-CoA. The protein operates within lipid metabolism; malonyl-CoA biosynthesis; malonyl-CoA from acetyl-CoA: step 1/1. Its function is as follows. Component of the acetyl coenzyme A carboxylase (ACC) complex. First, biotin carboxylase catalyzes the carboxylation of biotin on its carrier protein (BCCP) and then the CO(2) group is transferred by the carboxyltransferase to acetyl-CoA to form malonyl-CoA. This Neisseria meningitidis serogroup C (strain 053442) protein is Acetyl-coenzyme A carboxylase carboxyl transferase subunit alpha.